Reading from the N-terminus, the 1124-residue chain is Angiopoietin-1 receptor (1124 aa).

A signal peptide spans 1 to 22 (MDSLASLVLCGVSLLLSGTVEG). Residues 23–748 (AMDLILINSL…ADLGGGKMLL (726 aa)) are Extracellular-facing. Cys44 and Cys102 are oxidised to a cystine. One can recognise an Ig-like C2-type 1 domain in the interval 44–123 (CIASGWRPHE…RTMKMRQQAS (80 aa)). Residues Asn140 and Asn158 are each glycosylated (N-linked (GlcNAc...) asparagine). EGF-like domains lie at 210–252 (RCEA…RTCE), 254–299 (ACEL…LQCN), and 301–341 (ACHP…LQCE). 13 cysteine pairs are disulfide-bonded: Cys211/Cys220, Cys224/Cys233, Cys227/Cys240, Cys242/Cys251, Cys255/Cys264, Cys268/Cys274, Cys280/Cys287, Cys289/Cys298, Cys302/Cys311, Cys315/Cys323, Cys317/Cys329, Cys331/Cys340, and Cys370/Cys424. Residues 350–440 (PKIVDLPDHI…GMVEKPFNIS (91 aa)) form the Ig-like C2-type 2 domain. 7 N-linked (GlcNAc...) asparagine glycosylation sites follow: Asn399, Asn438, Asn464, Asn560, Asn596, Asn649, and Asn691. 3 Fibronectin type-III domains span residues 447 to 541 (PLNA…TASI), 545 to 636 (PPRG…TLSD), and 641 to 735 (QPEN…LPES). Residues 749–769 (IAILGSAGMTCLTVLLAFLII) traverse the membrane as a helical segment. Residues 770–1124 (LQLKRANVQR…GIDCSAEEAA (355 aa)) lie on the Cytoplasmic side of the membrane. The Protein kinase domain occupies 824–1096 (IKFQDVIGEG…QILVSLNRML (273 aa)). ATP contacts are provided by residues 830–838 (IGEGNFGQV) and Lys855. Tyr860 carries the phosphotyrosine; by autocatalysis modification. The Proton acceptor role is filled by Asp964. A phosphotyrosine; by autocatalysis mark is found at Tyr992, Tyr1102, and Tyr1108.

The protein belongs to the protein kinase superfamily. Tyr protein kinase family. Tie subfamily. As to quaternary structure, homodimer. Heterodimer with TIE1. Interacts with ANGPT1, ANGPT2 and ANGPT4. At cell-cell contacts in quiescent cells, forms a signaling complex composed of ANGPT1 plus TEK molecules from two adjoining cells. In the absence of endothelial cell-cell contacts, interaction with ANGPT1 mediates contacts with the extracellular matrix. Interacts with PTPRB; this promotes endothelial cell-cell adhesion. Interacts with DOK2, GRB2, GRB7, GRB14, PIK3R1 and PTPN11/SHP2. Colocalizes with DOK2 at contacts with the extracellular matrix in migrating cells. Interacts (tyrosine phosphorylated) with TNIP2. Interacts (tyrosine phosphorylated) with SHC1 (via SH2 domain). Proteolytic processing leads to the shedding of the extracellular domain (soluble TIE-2 alias sTIE-2). Post-translationally, autophosphorylated on tyrosine residues in response to ligand binding. Autophosphorylation occurs in trans, i.e. one subunit of the dimeric receptor phosphorylates tyrosine residues on the other subunit. Autophosphorylation occurs in a sequential manner, where Tyr-992 in the kinase activation loop is phosphorylated first, followed by autophosphorylation at Tyr-1108 and at additional tyrosine residues. ANGPT1-induced phosphorylation is impaired during hypoxia, due to increased expression of ANGPT2. Phosphorylation is important for interaction with GRB14, PIK3R1 and PTPN11. Phosphorylation at Tyr-1102 is important for interaction with SHC1, GRB2 and GRB7. Phosphorylation at Tyr-1108 is important for interaction with DOK2 and for coupling to downstream signal transduction pathways in endothelial cells. Dephosphorylated by PTPRB. In terms of processing, ubiquitinated. The phosphorylated receptor is ubiquitinated and internalized, leading to its degradation. In terms of tissue distribution, detected in umbilical vein endothelial cells. Proteolytic processing gives rise to a soluble extracellular domain that is detected in blood plasma (at protein level). Predominantly expressed in endothelial cells and their progenitors, the angioblasts. Has been directly found in placenta and lung, with a lower level in umbilical vein endothelial cells, brain and kidney.

The protein localises to the cell membrane. Its subcellular location is the cell junction. The protein resides in the focal adhesion. It is found in the cytoplasm. It localises to the cytoskeleton. The protein localises to the secreted. It catalyses the reaction L-tyrosyl-[protein] + ATP = O-phospho-L-tyrosyl-[protein] + ADP + H(+). With respect to regulation, angiopoietin binding leads to receptor dimerization and activation by autophosphorylation at Tyr-992 on the kinase activation loop. Inhibited by staurosporine, K252a, PP2, damnacanthal, SB203580, CEP-11207, CEP-11981 and CE-245677. Inhibited by triazine, thienopyrimidine and thiazolopyrimidine derivatives. Tyrosine-protein kinase that acts as a cell-surface receptor for ANGPT1, ANGPT2 and ANGPT4 and regulates angiogenesis, endothelial cell survival, proliferation, migration, adhesion and cell spreading, reorganization of the actin cytoskeleton, but also maintenance of vascular quiescence. Has anti-inflammatory effects by preventing the leakage of pro-inflammatory plasma proteins and leukocytes from blood vessels. Required for normal angiogenesis and heart development during embryogenesis. Required for post-natal hematopoiesis. After birth, activates or inhibits angiogenesis, depending on the context. Inhibits angiogenesis and promotes vascular stability in quiescent vessels, where endothelial cells have tight contacts. In quiescent vessels, ANGPT1 oligomers recruit TEK to cell-cell contacts, forming complexes with TEK molecules from adjoining cells, and this leads to preferential activation of phosphatidylinositol 3-kinase and the AKT1 signaling cascades. In migrating endothelial cells that lack cell-cell adhesions, ANGT1 recruits TEK to contacts with the extracellular matrix, leading to the formation of focal adhesion complexes, activation of PTK2/FAK and of the downstream kinases MAPK1/ERK2 and MAPK3/ERK1, and ultimately to the stimulation of sprouting angiogenesis. ANGPT1 signaling triggers receptor dimerization and autophosphorylation at specific tyrosine residues that then serve as binding sites for scaffold proteins and effectors. Signaling is modulated by ANGPT2 that has lower affinity for TEK, can promote TEK autophosphorylation in the absence of ANGPT1, but inhibits ANGPT1-mediated signaling by competing for the same binding site. Signaling is also modulated by formation of heterodimers with TIE1, and by proteolytic processing that gives rise to a soluble TEK extracellular domain. The soluble extracellular domain modulates signaling by functioning as decoy receptor for angiopoietins. TEK phosphorylates DOK2, GRB7, GRB14, PIK3R1; SHC1 and TIE1. The chain is Angiopoietin-1 receptor from Homo sapiens (Human).